A 73-amino-acid polypeptide reads, in one-letter code: ATP synthase subunit 9, mitochondrial (73 aa).

2 consecutive transmembrane segments (helical) span residues V12–I32 and I50–L70.

This sequence belongs to the ATPase C chain family. F-type ATPases have 2 components, CF(1) - the catalytic core - and CF(0) - the membrane proton channel. CF(1) has five subunits: alpha(3), beta(3), gamma(1), delta(1), epsilon(1). CF(0) has three main subunits: a, b and c.

It is found in the mitochondrion inner membrane. Its function is as follows. Mitochondrial membrane ATP synthase (F(1)F(0) ATP synthase or Complex V) produces ATP from ADP in the presence of a proton gradient across the membrane which is generated by electron transport complexes of the respiratory chain. F-type ATPases consist of two structural domains, F(1) - containing the extramembraneous catalytic core and F(0) - containing the membrane proton channel, linked together by a central stalk and a peripheral stalk. During catalysis, ATP synthesis in the catalytic domain of F(1) is coupled via a rotary mechanism of the central stalk subunits to proton translocation. Part of the complex F(0) domain. A homomeric c-ring of probably 10 subunits is part of the complex rotary element. The chain is ATP synthase subunit 9, mitochondrial (ATP9) from Mycosarcoma maydis (Corn smut fungus).